Consider the following 269-residue polypeptide: Ribosomal RNA small subunit methyltransferase J (269 aa).

Residues 124–125 and Asp-188 each bind S-adenosyl-L-methionine; that span reads ER.

This sequence belongs to the methyltransferase superfamily. RsmJ family.

It localises to the cytoplasm. The enzyme catalyses guanosine(1516) in 16S rRNA + S-adenosyl-L-methionine = N(2)-methylguanosine(1516) in 16S rRNA + S-adenosyl-L-homocysteine + H(+). Specifically methylates the guanosine in position 1516 of 16S rRNA. This is Ribosomal RNA small subunit methyltransferase J from Saccharophagus degradans (strain 2-40 / ATCC 43961 / DSM 17024).